The following is a 184-amino-acid chain: Protein GrpE (184 aa).

A compositionally biased stretch (acidic residues) spans 1–10 (MTDTPPENEE). The tract at residues 1–22 (MTDTPPENEEQHESNVQNENEV) is disordered.

This sequence belongs to the GrpE family. In terms of assembly, homodimer.

Its subcellular location is the cytoplasm. In terms of biological role, participates actively in the response to hyperosmotic and heat shock by preventing the aggregation of stress-denatured proteins, in association with DnaK and GrpE. It is the nucleotide exchange factor for DnaK and may function as a thermosensor. Unfolded proteins bind initially to DnaJ; upon interaction with the DnaJ-bound protein, DnaK hydrolyzes its bound ATP, resulting in the formation of a stable complex. GrpE releases ADP from DnaK; ATP binding to DnaK triggers the release of the substrate protein, thus completing the reaction cycle. Several rounds of ATP-dependent interactions between DnaJ, DnaK and GrpE are required for fully efficient folding. This chain is Protein GrpE, found in Chlamydia pneumoniae (Chlamydophila pneumoniae).